The following is a 1476-amino-acid chain: Cystic fibrosis transmembrane conductance regulator (1476 aa).

The Cytoplasmic segment spans residues 1 to 77 (MQKSPLEKAS…QLIHALRRCF (77 aa)). A helical transmembrane segment spans residues 78-98 (VWRFVFYGVLLYLGEVTKAVQ). Positions 81-365 (FVFYGVLLYL…TAVQIWYDSL (285 aa)) constitute an ABC transmembrane type-1 1 domain. Over 99–122 (PVLLGRIIASYDPDNTEERSIAIY) the chain is Extracellular. Residues 123-146 (LGIGLCLLFIVRTLLLHPAIFGLH) traverse the membrane as a helical segment. Residues 147–195 (HIGMQMRIAMFSLIYKKTLKLSSRVLDKISIGQLISLLSNNLNKFDEGL) are Cytoplasmic-facing. Residues 196–216 (ALAHFIWIAPLQVVLLMGLLW) traverse the membrane as a helical segment. Over 217 to 222 (DLLQFS) the chain is Extracellular. A helical transmembrane segment spans residues 223-243 (AFCGLGLLIVLVIFQAILGKM). At 244–298 (MVKYRDKRAAKINERLVITSEVIDNIYSVKAYCWESAMEKIIESLREEELKMTRR) the chain is on the cytoplasmic side. The helical transmembrane segment at 299-319 (SAYMRFFTSSAFFFSGFFVVF) threads the bilayer. Over 320 to 339 (LSVLPYTVINGIVLRKIFTT) the chain is Extracellular. The chain crosses the membrane as a helical span at residues 340–358 (ISFCIVLRMSVTRQFPTAV). Residues 359–853 (QIWYDSLGMI…YLRYFTLHRG (495 aa)) lie on the Cytoplasmic side of the membrane. Residues Trp-401, 458–465 (GSTGAGKT), and Gln-493 contribute to the ATP site. Residues 412-646 (VQLNNDDRKT…RPDFSSKLMG (235 aa)) form the ABC transporter 1 domain. Cys-524 is lipidated: S-palmitoyl cysteine. Ser-549 and Ser-660 each carry phosphoserine. A disordered R region region spans residues 654–826 (TEERRSSILT…EEINEEDLKE (173 aa)). Ser-670 carries the phosphoserine; by PKA modification. Ser-684, Ser-698, and Ser-710 each carry phosphoserine. Thr-715 bears the Phosphothreonine mark. A phosphoserine mark is found at Ser-732, Ser-763, Ser-785, Ser-790, and Ser-808. Residues 854 to 874 (LFAVLIWCVLVFLVEVAASLF) form a helical membrane-spanning segment. The ABC transmembrane type-1 2 domain maps to 854–1153 (LFAVLIWCVL…SSIDTDSLMR (300 aa)). At 875–913 (VLWLLKNNPVNGGNNGTKIANTSYVVVITSSSFYYIFYI) the chain is on the extracellular side. Residues Asn-889 and Asn-895 are each glycosylated (N-linked (GlcNAc...) asparagine). Residues 914-934 (YVGVADTLLALSLFRGLPLVH) traverse the membrane as a discontinuously helical segment. Residues 935–985 (TLITASKILHRKMLHSILHAPMSTFNKLKAGGILNRFSKDIAILDDFLPLT) are Cytoplasmic-facing. A helical transmembrane segment spans residues 986-1006 (IFDFIQLLFIVVGAIIVVSAL). At 1007–1008 (QP) the chain is on the extracellular side. The helical transmembrane segment at 1009–1029 (YIFLATVPGLAVFILLRAYFL) threads the bilayer. Over 1030–1090 (HTSQQLKQLE…TANWFMYLAT (61 aa)) the chain is Cytoplasmic. Residues 1091-1111 (LRWFQMRIDMIFVLFFIVVTF) form a helical membrane-spanning segment. The Extracellular segment spans residues 1112–1125 (ISILTTGEGEGTTG). The chain crosses the membrane as a helical span at residues 1126-1146 (IILTLAMNIMSTLQWAVNSSI). The Cytoplasmic portion of the chain corresponds to 1147–1476 (DTDSLMRSVS…TEEEVQETRL (330 aa)). Positions 1208–1439 (VKDLTVKYVD…KSVFQRALSS (232 aa)) constitute an ABC transporter 2 domain. Residues Tyr-1215 and 1240–1247 (GRTGSGKS) each bind ATP. The interaction with GORASP2 stretch occupies residues 1382-1476 (RVLRQAFAGC…TEEEVQETRL (95 aa)). Cys-1391 carries the S-palmitoyl cysteine lipid modification. Ser-1440 and Ser-1452 each carry phosphoserine. Residues 1445 to 1456 (LFHGRHSSKQKP) are compositionally biased toward basic residues. The interval 1445–1476 (LFHGRHSSKQKPRTQITAVKEETEEEVQETRL) is disordered. Acidic residues predominate over residues 1466–1476 (ETEEEVQETRL). A PDZ-binding motif is present at residues 1474–1476 (TRL).

The protein belongs to the ABC transporter superfamily. ABCC family. CFTR transporter (TC 3.A.1.202) subfamily. Monomer; does not require oligomerization for channel activity. May form oligomers in the membrane. Interacts with SLC4A7 through NHERF1. Interacts with SHANK2. Interacts with NHERF1 and MYO6. Interacts (via C-terminus) with GOPC (via PDZ domain); this promotes CFTR internalization and thereby decreases channel activity. Interacts with SLC4A7 through NHERF1. Found in a complex with MYO5B and RAB11A. Interacts with ANO1. Interacts with SLC26A8. Interacts with AHCYL1; the interaction increases CFTR activity. Interacts with CSE1L. The core-glycosylated form interacts with GORASP2 (via PDZ GRASP-type 1 domain) in respone to ER stress. Interacts with MARCHF2; the interaction leads to CFTR ubiqtuitination and degradation. Interacts with ADGRG2. Post-translationally, N-glycosylated. Phosphorylated; cAMP treatment promotes phosphorylation and activates the channel. Dephosphorylation decreases the ATPase activity (in vitro). Phosphorylation at PKA sites activates the channel. Phosphorylation at PKC sites enhances the response to phosphorylation by PKA. Phosphorylated by AMPK; this inhibits channel activity. In terms of processing, ubiquitinated, leading to its degradation in the lysosome. Deubiquitination by USP10 in early endosomes enhances its endocytic recycling to the cell membrane. Ubiquitinated by RNF185 during ER stress. Ubiquitinated by MARCHF2. As to expression, detected in epithelial cells in nasopharynx, submandibular gland, pancreas and ileum (at protein level). Expressed in the epididymis. In the caput section of the epididymis, expressed uniformly on both the luminal and basolateral sides of the ducts and on sperm in the caput lumen (at protein level). In the cauda, detected along the luminal border but not continuously and is also expressed on the basolateral surface. Within the caudal lumen, detected on sperm.

The protein localises to the apical cell membrane. The protein resides in the early endosome membrane. It localises to the cell membrane. It is found in the recycling endosome membrane. Its subcellular location is the endoplasmic reticulum membrane. The protein localises to the nucleus. It carries out the reaction ATP + H2O + closed Cl(-) channel = ADP + phosphate + open Cl(-) channel.. It catalyses the reaction chloride(in) = chloride(out). The enzyme catalyses hydrogencarbonate(in) = hydrogencarbonate(out). The catalysed reaction is ATP + H2O = ADP + phosphate + H(+). In terms of biological role, epithelial ion channel that plays an important role in the regulation of epithelial ion and water transport and fluid homeostasis. Mediates the transport of chloride ions across the cell membrane. Possesses an intrinsic ATPase activity and utilizes ATP to gate its channel; the passive flow of anions through the channel is gated by cycles of ATP binding and hydrolysis by the ATP-binding domains. The ion channel is also permeable to HCO(3)(-); selectivity depends on the extracellular chloride concentration. Exerts its function also by modulating the activity of other ion channels and transporters. Contributes to the regulation of the pH and the ion content of the epithelial fluid layer. Modulates the activity of the epithelial sodium channel (ENaC) complex, in part by regulating the cell surface expression of the ENaC complex. May regulate bicarbonate secretion and salvage in epithelial cells by regulating the transporter SLC4A7. Can inhibit the chloride channel activity of ANO1. Plays a role in the chloride and bicarbonate homeostasis during sperm epididymal maturation and capacitation. This is Cystic fibrosis transmembrane conductance regulator from Rattus norvegicus (Rat).